Reading from the N-terminus, the 399-residue chain is Type II secretion system protein L (399 aa).

The Cytoplasmic segment spans residues 1-247; that stretch reads MSKAENTSGK…VKPWKQALLP (247 aa). Residues 248–264 traverse the membrane as a helical segment; it reads WRNVLIALSAWLLLVLG. Residues 265-399 lie on the Periplasmic side of the membrane; the sequence is ESVWTHYQWY…EGQLTLRSQP (135 aa).

It belongs to the GSP L family. In terms of assembly, type II secretion system is composed of four main components: the outer membrane complex, the inner membrane complex, the cytoplasmic secretion ATPase and the periplasm-spanning pseudopilus. Forms homodimers. Interacts with OutM/GspM. Interacts with OutE/GspE and OutF/GspF.

Its subcellular location is the cell inner membrane. Functionally, inner membrane component of the type II secretion system required for the energy-dependent secretion of extracellular factors such as proteases and toxins from the periplasm. Plays a role in the complex assembly and recruits OutM resulting in a stable complex in the inner membrane. Provides thus a link between the energy-providing OutE protein in the cytoplasm and the rest of the T2SS machinery. The polypeptide is Type II secretion system protein L (outL) (Dickeya chrysanthemi (Pectobacterium chrysanthemi)).